The primary structure comprises 199 residues: NAD(P)H dehydrogenase (quinone) (199 aa).

The Flavodoxin-like domain occupies 4 to 190 (ILVLYYSSWG…EGARFQGKRL (187 aa)). FMN contacts are provided by residues 10–15 (SSWGHM) and 78–80 (TRY). Position 12 (W12) interacts with NAD(+). W98 is a binding site for substrate. FMN is bound by residues 113 to 119 (STATQHG) and H134. The segment at 155–175 (VRGGAPYGMTTTSDTDGSRMP) is disordered.

Belongs to the WrbA family. Requires FMN as cofactor.

It catalyses the reaction a quinone + NADH + H(+) = a quinol + NAD(+). It carries out the reaction a quinone + NADPH + H(+) = a quinol + NADP(+). The chain is NAD(P)H dehydrogenase (quinone) from Chelativorans sp. (strain BNC1).